Reading from the N-terminus, the 724-residue chain is Catalase-peroxidase (724 aa).

A cross-link (tryptophyl-tyrosyl-methioninium (Trp-Tyr) (with M-252)) is located at residues 98–226; sequence WHSAGSYRIA…LAAVMMGLIY (129 aa). His-99 functions as the Proton acceptor in the catalytic mechanism. A cross-link (tryptophyl-tyrosyl-methioninium (Tyr-Met) (with W-98)) is located at residues 226-252; it reads YVNPEGVDGHPDPQKTANDVRVTFARM. Residue His-267 coordinates heme b.

This sequence belongs to the peroxidase family. Peroxidase/catalase subfamily. As to quaternary structure, homodimer or homotetramer. Heme b is required as a cofactor. In terms of processing, formation of the three residue Trp-Tyr-Met cross-link is important for the catalase, but not the peroxidase activity of the enzyme.

The catalysed reaction is H2O2 + AH2 = A + 2 H2O. The enzyme catalyses 2 H2O2 = O2 + 2 H2O. Bifunctional enzyme with both catalase and broad-spectrum peroxidase activity. This chain is Catalase-peroxidase, found in Edwardsiella tarda.